The sequence spans 716 residues: Polyribonucleotide nucleotidyltransferase (716 aa).

2 residues coordinate Mg(2+): Asp490 and Asp496. The KH domain occupies 556–615 (PKIETLTIPTDKIREVIGSGGKVIREIVETSGAKVDINDDGVIKIASNDQAAIKKAYDMI). The 69-residue stretch at 625 to 693 (GQIYTGKVVK…ERGKVRLGMK (69 aa)) folds into the S1 motif domain. The tract at residues 695–716 (VDQETGQEIQPEKKEREEAGEA) is disordered. Residues 704 to 716 (QPEKKEREEAGEA) are compositionally biased toward basic and acidic residues.

The protein belongs to the polyribonucleotide nucleotidyltransferase family. Requires Mg(2+) as cofactor.

The protein resides in the cytoplasm. The catalysed reaction is RNA(n+1) + phosphate = RNA(n) + a ribonucleoside 5'-diphosphate. Involved in mRNA degradation. Catalyzes the phosphorolysis of single-stranded polyribonucleotides processively in the 3'- to 5'-direction. This chain is Polyribonucleotide nucleotidyltransferase, found in Cereibacter sphaeroides (strain KD131 / KCTC 12085) (Rhodobacter sphaeroides).